We begin with the raw amino-acid sequence, 157 residues long: Transcription elongation factor GreA (157 aa).

A coiled-coil region spans residues 9-30 (LEGAQQLKEELKRRKTTDRKRI).

The protein belongs to the GreA/GreB family.

Its function is as follows. Necessary for efficient RNA polymerase transcription elongation past template-encoded arresting sites. The arresting sites in DNA have the property of trapping a certain fraction of elongating RNA polymerases that pass through, resulting in locked ternary complexes. Cleavage of the nascent transcript by cleavage factors such as GreA or GreB allows the resumption of elongation from the new 3'terminus. GreA releases sequences of 2 to 3 nucleotides. The chain is Transcription elongation factor GreA from Magnetococcus marinus (strain ATCC BAA-1437 / JCM 17883 / MC-1).